The sequence spans 348 residues: MAETYRFPRFSHEENGTVEPLPLKTGPDKKAIPHIRIVKVGDPPKHGVRYLDVLLLGFFETPKQGPLSGSISDLTESTSYSICGSGSLPIGIAKYYGTDQELLKACIDLKITVRRTVRSGEMIVYMVDSIHAPLLPWSSRLRQGMIYNANKVALAPQCLPVDKDIRFRVVFVNGTSLGTITIAKVPKTLADLALPNSISVNLLVTLKAGVSTEQKGILPVLDDDGEKKLNFMVHLGIIRRKVGKIYSVEYCKNKIEKMKLIFSLGLVGGISFHVHATGTLSKTLMSQLAWKKAVCYPLMDLNPHMNLVIWAASVEITSVDAVFQPAIPKEFRYYPNVVAKSIGKIRKI.

A disulfide bridge connects residues cysteine 251 and cysteine 295.

The protein belongs to the morbillivirus/respirovirus/rubulavirus M protein family.

It localises to the virion. Functionally, the M protein has a crucial role in virus assembly and interacts with the RNP complex as well as with the viral membrane. The chain is Matrix protein (M) from Homo sapiens (Human).